Here is a 312-residue protein sequence, read N- to C-terminus: Pantothenate kinase (312 aa).

97-104 (GSVAVGKS) is a binding site for ATP.

This sequence belongs to the prokaryotic pantothenate kinase family.

The protein localises to the cytoplasm. It catalyses the reaction (R)-pantothenate + ATP = (R)-4'-phosphopantothenate + ADP + H(+). It functions in the pathway cofactor biosynthesis; coenzyme A biosynthesis; CoA from (R)-pantothenate: step 1/5. The sequence is that of Pantothenate kinase from Corynebacterium glutamicum (strain ATCC 13032 / DSM 20300 / JCM 1318 / BCRC 11384 / CCUG 27702 / LMG 3730 / NBRC 12168 / NCIMB 10025 / NRRL B-2784 / 534).